A 115-amino-acid chain; its full sequence is Large ribosomal subunit protein bL19 (115 aa).

It belongs to the bacterial ribosomal protein bL19 family.

In terms of biological role, this protein is located at the 30S-50S ribosomal subunit interface and may play a role in the structure and function of the aminoacyl-tRNA binding site. The protein is Large ribosomal subunit protein bL19 of Latilactobacillus sakei subsp. sakei (strain 23K) (Lactobacillus sakei subsp. sakei).